An 89-amino-acid polypeptide reads, in one-letter code: Small ribosomal subunit protein uS15 (89 aa).

Belongs to the universal ribosomal protein uS15 family. In terms of assembly, part of the 30S ribosomal subunit. Forms a bridge to the 50S subunit in the 70S ribosome, contacting the 23S rRNA.

One of the primary rRNA binding proteins, it binds directly to 16S rRNA where it helps nucleate assembly of the platform of the 30S subunit by binding and bridging several RNA helices of the 16S rRNA. In terms of biological role, forms an intersubunit bridge (bridge B4) with the 23S rRNA of the 50S subunit in the ribosome. This is Small ribosomal subunit protein uS15 from Aeromonas hydrophila subsp. hydrophila (strain ATCC 7966 / DSM 30187 / BCRC 13018 / CCUG 14551 / JCM 1027 / KCTC 2358 / NCIMB 9240 / NCTC 8049).